The sequence spans 396 residues: Elongation factor Tu (396 aa).

The tr-type G domain maps to 10 to 206 (KPHLNIGTIG…AVDENVPDPV (197 aa)). A G1 region spans residues 19 to 26 (GHVDHGKT). Residue 19 to 26 (GHVDHGKT) participates in GTP binding. Thr-26 is a binding site for Mg(2+). The interval 62-66 (GITIN) is G2. Residues 83 to 86 (DAPG) are G3. GTP-binding positions include 83 to 87 (DAPGH) and 138 to 141 (NKSD). Residues 138–141 (NKSD) form a G4 region. Positions 176–178 (SAL) are G5.

It belongs to the TRAFAC class translation factor GTPase superfamily. Classic translation factor GTPase family. EF-Tu/EF-1A subfamily. In terms of assembly, monomer.

Its subcellular location is the cytoplasm. The catalysed reaction is GTP + H2O = GDP + phosphate + H(+). In terms of biological role, GTP hydrolase that promotes the GTP-dependent binding of aminoacyl-tRNA to the A-site of ribosomes during protein biosynthesis. In Kocuria rhizophila (strain ATCC 9341 / DSM 348 / NBRC 103217 / DC2201), this protein is Elongation factor Tu.